A 578-amino-acid polypeptide reads, in one-letter code: Arginine--tRNA ligase (578 aa).

Positions 127-137 (PNLAKEMHVGH) match the 'HIGH' region motif.

The protein belongs to the class-I aminoacyl-tRNA synthetase family. In terms of assembly, monomer.

The protein resides in the cytoplasm. The catalysed reaction is tRNA(Arg) + L-arginine + ATP = L-arginyl-tRNA(Arg) + AMP + diphosphate. This chain is Arginine--tRNA ligase, found in Pseudomonas syringae pv. tomato (strain ATCC BAA-871 / DC3000).